We begin with the raw amino-acid sequence, 69 residues long: Small, acid-soluble spore protein A (69 aa).

The protein belongs to the alpha/beta-type SASP family.

SASP are bound to spore DNA. They are double-stranded DNA-binding proteins that cause DNA to change to an a-like conformation. They protect the DNA backbone from chemical and enzymatic cleavage and are thus involved in dormant spore's high resistance to UV light. The polypeptide is Small, acid-soluble spore protein A (sspA) (Bacillus subtilis (strain 168)).